An 815-amino-acid chain; its full sequence is Cell division cycle protein 48 (815 aa).

The segment at 1–30 is disordered; that stretch reads MNAPSTMTDKKPEVEHLQGENPPKDTYSAE. Residues 8 to 18 show a composition bias toward basic and acidic residues; sequence TDKKPEVEHLQ. Residues 267-273, Asn-368, His-404, and 541-546 each bind ATP; these read PGTGKTL and GTGKTL. A disordered region spans residues 794-815; sequence DSADSNTNGPSFGNDGADDLYA. Residues 795–804 are compositionally biased toward polar residues; sequence SADSNTNGPS.

It belongs to the AAA ATPase family. In terms of assembly, component of the ribosome quality control complex (RQC), composed of the E3 ubiquitin ligase rkr1/ltn1, rqc1 and mtr1/rqc2, as well as cdc48 and its ubiquitin-binding cofactors. RQC forms a stable complex with 60S ribosomal subunits. Interacts with ubx2 and ubx3. Interacts with lub1. Interacts with rbd2 (via C-terminal SHP box); the interaction is required for rbd2-mediated cleavage of sre1 and sre2.

It is found in the cytoplasm. The protein resides in the nucleus. It carries out the reaction ATP + H2O = ADP + phosphate + H(+). Its activity is regulated as follows. The first ATP-binding region has low ATPase activity. The second ATP-binding region is responsible for ATPase activity. ATP binding to the first ATP-binding region induces intrinsic activity of the second ATP-binding region. While ATP binding to the first ATP-binding region appears to prevent ATP hydrolysis by the second ATP-binding region, ADP-binding to first region promotes the coordinate and cooperative ATPase cycle of the second ATP-binding region. ATP binding to the first ATP-binding region induces a conformational change, promoting the rotation of the first ATP-binding region relative to the second ATP-binding region in the hexamer. Its function is as follows. ATP-dependent chaperone which probably uses the energy provided by ATP hydrolysis to generate mechanical force to unfold substrate proteins, disassemble protein complexes, and disaggregate protein aggregates. By recruiting and promoting the degradation of ubiquitinated proteins, plays a role in the ubiquitin fusion degradation (UFD) pathway. Has a role in the endoplasmic reticulum-associated degradation (ERAD) pathway which mediates the cytoplasmic elimination of misfolded proteins exported from the ER. Involved in spindle disassembly. Component of the ribosome quality control complex (RQC), a ribosome-associated complex that mediates ubiquitination and extraction of incompletely synthesized nascent chains for proteasomal degradation. CDC48 may provide the mechanical force that dislodges the polyubiquitinated nascent peptides from the exit channel. Required for ribophagy, a process which relocalizes ribosomal particles into the vacuole for degradation in response to starvation. Has a role in substrate recognition mediating rbd2-dependent cleavage of sterol regulatory element-binding protein sre1 and sre2. The sequence is that of Cell division cycle protein 48 from Schizosaccharomyces pombe (strain 972 / ATCC 24843) (Fission yeast).